The sequence spans 476 residues: Ribulose bisphosphate carboxylase/oxygenase activase 1, chloroplastic (476 aa).

The transit peptide at 1–56 (MAAAYSTVGAVNRAPLSLNGSGARASLVPSTAFFGSSLKKSAAKFPKASSGNFKIV) directs the protein to the chloroplast. Residue 165–172 (GGKGQGKS) coordinates ATP.

It belongs to the RuBisCO activase family.

It is found in the plastid. The protein resides in the chloroplast stroma. Activation of RuBisCO (ribulose-1,5-bisphosphate carboxylase/oxygenase; EC 4.1.1.39) involves the ATP-dependent carboxylation of the epsilon-amino group of lysine leading to a carbamate structure. This Larrea tridentata (Creosote bush) protein is Ribulose bisphosphate carboxylase/oxygenase activase 1, chloroplastic (RCA1).